A 146-amino-acid chain; its full sequence is Protein archease (146 aa).

Ca(2+)-binding residues include aspartate 16, aspartate 145, and isoleucine 146.

It belongs to the archease family.

Activates the tRNA-splicing ligase complex by facilitating the enzymatic turnover of catalytic subunit RtcB. Acts by promoting the guanylylation of RtcB, a key intermediate step in tRNA ligation. Can also alter the NTP specificity of RtcB such that ATP, dGTP or ITP is used efficiently. This is Protein archease from Methanosarcina acetivorans (strain ATCC 35395 / DSM 2834 / JCM 12185 / C2A).